A 137-amino-acid chain; its full sequence is Chaperone protein YscB (137 aa).

In terms of assembly, interacts with SycN to form a complex which specifically binds to YopN.

The protein resides in the cytoplasm. It localises to the cell inner membrane. Functions as a specific chaperone for YopN. It could facilitate the secretion and the subsequent translocation of YopN. This is Chaperone protein YscB (yscB) from Yersinia enterocolitica.